A 471-amino-acid polypeptide reads, in one-letter code: Ubiquitin-conjugating enzyme E2 variant 3 (471 aa).

In terms of domain architecture, UEV spans 2 to 145 (DVNSEPVKKV…EEEPPLGTKS (144 aa)). 183 to 211 (GDLGIAAVLSIMAKSCVDKLVLIDIPENS) contributes to the NAD(+) binding site.

It in the N-terminal section; belongs to the ubiquitin-conjugating enzyme family. UEV subfamily. In the C-terminal section; belongs to the LDH/MDH superfamily. Homodimer.

Its function is as follows. Possible negative regulator of polyubiquitination. The sequence is that of Ubiquitin-conjugating enzyme E2 variant 3 (uevld) from Danio rerio (Zebrafish).